Here is a 147-residue protein sequence, read N- to C-terminus: Methylated-DNA--protein-cysteine methyltransferase (147 aa).

C112 (nucleophile; methyl group acceptor) is an active-site residue.

It belongs to the MGMT family.

Its subcellular location is the cytoplasm. The enzyme catalyses a 6-O-methyl-2'-deoxyguanosine in DNA + L-cysteinyl-[protein] = S-methyl-L-cysteinyl-[protein] + a 2'-deoxyguanosine in DNA. It carries out the reaction a 4-O-methyl-thymidine in DNA + L-cysteinyl-[protein] = a thymidine in DNA + S-methyl-L-cysteinyl-[protein]. Involved in the cellular defense against the biological effects of O6-methylguanine (O6-MeG) and O4-methylthymine (O4-MeT) in DNA. Repairs the methylated nucleobase in DNA by stoichiometrically transferring the methyl group to a cysteine residue in the enzyme. This is a suicide reaction: the enzyme is irreversibly inactivated. In Archaeoglobus fulgidus (strain ATCC 49558 / DSM 4304 / JCM 9628 / NBRC 100126 / VC-16), this protein is Methylated-DNA--protein-cysteine methyltransferase.